We begin with the raw amino-acid sequence, 156 residues long: Transcriptional repressor NrdR (156 aa).

A zinc finger spans residues 3–34 (CPYCGETEDKVIDSRQGKEADVIRRRRECLSC). The 91-residue stretch at 49–139 (LVIIKKDGRR…VYREFKHVND (91 aa)) folds into the ATP-cone domain.

It belongs to the NrdR family. Zn(2+) serves as cofactor.

Negatively regulates transcription of bacterial ribonucleotide reductase nrd genes and operons by binding to NrdR-boxes. The protein is Transcriptional repressor NrdR of Desulfatibacillum aliphaticivorans.